Reading from the N-terminus, the 554-residue chain is Dihydroxy-acid dehydratase (554 aa).

Mg(2+) is bound at residue Asp78. Cys119 is a binding site for [2Fe-2S] cluster. 2 residues coordinate Mg(2+): Asp120 and Lys121. At Lys121 the chain carries N6-carboxylysine. Cys191 is a binding site for [2Fe-2S] cluster. Glu442 contacts Mg(2+). Ser468 acts as the Proton acceptor in catalysis.

The protein belongs to the IlvD/Edd family. As to quaternary structure, homodimer. It depends on [2Fe-2S] cluster as a cofactor. The cofactor is Mg(2+).

It carries out the reaction (2R)-2,3-dihydroxy-3-methylbutanoate = 3-methyl-2-oxobutanoate + H2O. The catalysed reaction is (2R,3R)-2,3-dihydroxy-3-methylpentanoate = (S)-3-methyl-2-oxopentanoate + H2O. The protein operates within amino-acid biosynthesis; L-isoleucine biosynthesis; L-isoleucine from 2-oxobutanoate: step 3/4. It participates in amino-acid biosynthesis; L-valine biosynthesis; L-valine from pyruvate: step 3/4. Its function is as follows. Functions in the biosynthesis of branched-chain amino acids. Catalyzes the dehydration of (2R,3R)-2,3-dihydroxy-3-methylpentanoate (2,3-dihydroxy-3-methylvalerate) into 2-oxo-3-methylpentanoate (2-oxo-3-methylvalerate) and of (2R)-2,3-dihydroxy-3-methylbutanoate (2,3-dihydroxyisovalerate) into 2-oxo-3-methylbutanoate (2-oxoisovalerate), the penultimate precursor to L-isoleucine and L-valine, respectively. The chain is Dihydroxy-acid dehydratase from Hydrogenobaculum sp. (strain Y04AAS1).